The sequence spans 185 residues: Ovomucoid (185 aa).

3 Kazal-like domains span residues 1–63 (VEVD…ECRE), 64–128 (AVPM…ECRK), and 131–185 (AAVS…FGKC). Disulfide bonds link Cys5–Cys43, Cys22–Cys40, Cys30–Cys61, Cys69–Cys108, Cys86–Cys105, Cys94–Cys126, Cys137–Cys167, Cys145–Cys164, and Cys153–Cys185. N-linked (GlcNAc...) asparagine glycosylation occurs at Asn174.

It is found in the secreted. In Meleagris gallopavo (Wild turkey), this protein is Ovomucoid.